The chain runs to 79 residues: U-actitoxin-Bgr3d (79 aa).

Residues 1–21 (MSYERLLCLVLVASFIAASVA) form the signal peptide. Positions 22–38 (QHPGDAPRMEDDSSAIQ) are excised as a propeptide. Intrachain disulfides connect cysteine 44-cysteine 76, cysteine 46-cysteine 69, and cysteine 59-cysteine 77.

This sequence belongs to the sea anemone type 3 (BDS) potassium channel toxin family.

Its subcellular location is the secreted. The protein resides in the nematocyst. Potently and selectively inhibits voltage-gated potassium channels Kv11/KCNH/ERG. Acts as a gating-modifier toxin that shifts the voltage-dependence of ERG activation in the positive direction and suppresses its current amplitudes elicited by strong depolarizing pulses that maximally activate the channels. This Bunodosoma granuliferum (Red warty sea anemone) protein is U-actitoxin-Bgr3d.